We begin with the raw amino-acid sequence, 679 residues long: E3 ubiquitin ligase RNF157 (679 aa).

G2 carries N-myristoyl glycine lipidation. An RING-type zinc finger spans residues 277–316 (CVVCLSDVRDTLILPCRHLCLCNTCADTLRYQANNCPICR). A D-box 1 motif is present at residues 329–332 (RKKL). Composition is skewed to polar residues over residues 339–349 (SFNPIISSQTS) and 478–537 (ESEN…SMSG). Disordered stretches follow at residues 339 to 362 (SFNPIISSQTSDSEEHPSSENIPP), 416 to 604 (LDRL…TQEG), and 650 to 679 (VSRNAQRRRLSSSSLEDSETRPCVWGPLAV). A compositionally biased stretch (acidic residues) spans 585–598 (QDAEGNDVIEEEDG). A D-box 2 motif is present at residues 656-659 (RRRL). 4 positions are modified to phosphoserine: S660, S661, S662, and S663.

Interacts with APBB1. Interacts with CHD1; CHD1-binding controls RNF157 stability. Interacts with ATRN, MEGF8, TECR, MSI2, PLRG1, BYSL, MTERF3, PSMA1, MRPS18B, PRPF4, FASTKD2, SLC25A1, SMU1, CNOT9, MRPS2, MAGT1, FXR2, EMD, PSMD8, HDAC1, RAN, HSD17B12, TXNDC5 and MRPL19. Phosphorylation at Ser-660, Ser-661, Ser-662 and Ser-663 downstream of the PI3K and MAPK pathways influences the E3 ligase activity and stability of RNF157 during the cell cycle in an anaphase-promoting complex/cyclosome-CDH1-dependent manner.

It is found in the cytoplasm. It catalyses the reaction S-ubiquitinyl-[E2 ubiquitin-conjugating enzyme]-L-cysteine + [acceptor protein]-L-lysine = [E2 ubiquitin-conjugating enzyme]-L-cysteine + N(6)-ubiquitinyl-[acceptor protein]-L-lysine.. Its function is as follows. E3 ubiquitin ligase that ubiquitinates APBB1 for its degradation by the proteasome and thus prevents apoptosis and promotes survival of neurons. Has a dual role in neurons as it is also required for dendrite growth and maintenance for which its ligase activity is not critical. May act as a scaffold molecule to regulate this process. Acts as a downstream effector of the interconnected PI3K and MAPK signaling pathways and thus participates in the regulation of the cell cycle. The chain is E3 ubiquitin ligase RNF157 (RNF157) from Homo sapiens (Human).